Reading from the N-terminus, the 542-residue chain is Chaperonin GroEL (542 aa).

ATP contacts are provided by residues 29–32 (TLGP), 86–90 (DGTTT), glycine 414, and aspartate 491.

It belongs to the chaperonin (HSP60) family. Forms a cylinder of 14 subunits composed of two heptameric rings stacked back-to-back. Interacts with the co-chaperonin GroES.

Its subcellular location is the cytoplasm. It carries out the reaction ATP + H2O + a folded polypeptide = ADP + phosphate + an unfolded polypeptide.. In terms of biological role, together with its co-chaperonin GroES, plays an essential role in assisting protein folding. The GroEL-GroES system forms a nano-cage that allows encapsulation of the non-native substrate proteins and provides a physical environment optimized to promote and accelerate protein folding. This is Chaperonin GroEL from Desulforamulus reducens (strain ATCC BAA-1160 / DSM 100696 / MI-1) (Desulfotomaculum reducens).